A 193-amino-acid polypeptide reads, in one-letter code: NADH-quinone oxidoreductase subunit B (193 aa).

[4Fe-4S] cluster is bound by residues C72, C73, C137, and C167.

Belongs to the complex I 20 kDa subunit family. NDH-1 is composed of 14 different subunits. Subunits NuoB, C, D, E, F, and G constitute the peripheral sector of the complex. [4Fe-4S] cluster serves as cofactor.

The protein localises to the cell inner membrane. It catalyses the reaction a quinone + NADH + 5 H(+)(in) = a quinol + NAD(+) + 4 H(+)(out). NDH-1 shuttles electrons from NADH, via FMN and iron-sulfur (Fe-S) centers, to quinones in the respiratory chain. Couples the redox reaction to proton translocation (for every two electrons transferred, four hydrogen ions are translocated across the cytoplasmic membrane), and thus conserves the redox energy in a proton gradient. This is NADH-quinone oxidoreductase subunit B from Brucella anthropi (strain ATCC 49188 / DSM 6882 / CCUG 24695 / JCM 21032 / LMG 3331 / NBRC 15819 / NCTC 12168 / Alc 37) (Ochrobactrum anthropi).